A 313-amino-acid polypeptide reads, in one-letter code: Olfactory receptor 1M1 (313 aa).

Residues 1-25 lie on the Extracellular side of the membrane; it reads MEPRNQTSASQFILLGLSEKPEQET. Asn5 carries N-linked (GlcNAc...) asparagine glycosylation. The helical transmembrane segment at 26–49 threads the bilayer; sequence LLFSLFFCMYLVMVVGNLLIILAI. Residues 50-57 are Cytoplasmic-facing; the sequence is SIDSHLHT. A helical membrane pass occupies residues 58–79; sequence PMYFFLANLSLVDFCLATNTIP. Topologically, residues 80–100 are extracellular; it reads KMLVSLQTGSKAISYPCCLIQ. A disulfide bridge links Cys97 with Cys189. The chain crosses the membrane as a helical span at residues 101–120; that stretch reads MYFFHFFGIVDSVIIAMMAY. Topologically, residues 121–139 are cytoplasmic; the sequence is DRFVAICHPLHYAKIMSLR. The chain crosses the membrane as a helical span at residues 140-158; the sequence is LCRLLVGALWAFSCFISLT. The Extracellular segment spans residues 159–196; the sequence is HILLMARLVFCGSHEVPHYFCDLTPILRLSCTDTSVNR. Residues 197–219 form a helical membrane-spanning segment; sequence IFILIVAGMVIATPFVCILASYA. Residues 220–236 lie on the Cytoplasmic side of the membrane; sequence RILVAIMKVPSAGGRKK. Residues 237–259 traverse the membrane as a helical segment; the sequence is AFSTCSSHLSVVALFYGTTIGVY. Residues 260–272 lie on the Extracellular side of the membrane; that stretch reads LCPSSVLTTVKEK. A helical transmembrane segment spans residues 273–292; it reads ASAVMYTAVTPMLNPFIYSL. Over 293–313 the chain is Cytoplasmic; it reads RNRDLKGALRKLVNRKITSSS.

Belongs to the G-protein coupled receptor 1 family.

The protein resides in the cell membrane. Its function is as follows. Odorant receptor. The polypeptide is Olfactory receptor 1M1 (Homo sapiens (Human)).